A 394-amino-acid polypeptide reads, in one-letter code: ATP phosphoribosyltransferase regulatory subunit (394 aa).

The protein belongs to the class-II aminoacyl-tRNA synthetase family. HisZ subfamily. As to quaternary structure, heteromultimer composed of HisG and HisZ subunits.

It localises to the cytoplasm. It participates in amino-acid biosynthesis; L-histidine biosynthesis; L-histidine from 5-phospho-alpha-D-ribose 1-diphosphate: step 1/9. Functionally, required for the first step of histidine biosynthesis. May allow the feedback regulation of ATP phosphoribosyltransferase activity by histidine. The sequence is that of ATP phosphoribosyltransferase regulatory subunit from Geobacillus kaustophilus (strain HTA426).